Reading from the N-terminus, the 191-residue chain is Putative glutathione-dependent formaldehyde-activating enzyme (191 aa).

The 147-residue stretch at 20 to 166 folds into the CENP-V/GFA domain; it reads FSGGTLRCHC…FKSVGLETYD (147 aa). Zn(2+) is bound by residues cysteine 27, cysteine 29, cysteine 48, cysteine 50, cysteine 53, cysteine 95, and cysteine 98.

It belongs to the Gfa family. Requires Zn(2+) as cofactor.

The enzyme catalyses S-(hydroxymethyl)glutathione = glutathione + formaldehyde. It functions in the pathway one-carbon metabolism; formaldehyde degradation; formate from formaldehyde (glutathione route): step 1/3. Catalyzes the condensation of formaldehyde and glutathione to S-hydroxymethylglutathione. The polypeptide is Putative glutathione-dependent formaldehyde-activating enzyme (Colletotrichum graminicola (strain M1.001 / M2 / FGSC 10212) (Maize anthracnose fungus)).